The sequence spans 168 residues: Gamma-glutamylaminecyclotransferase (168 aa).

The tract at residues 1–20 (MPGPECKWSTTETGAPCGTD) is disordered. Substrate is bound at residue 32–35 (YGTL). Glu107 functions as the Proton acceptor in the catalytic mechanism.

This sequence belongs to the gamma-glutamylcyclotransferase family. As to quaternary structure, monomer.

It carries out the reaction epsilon-(gamma-L-glutamyl)-L-lysine = 5-oxo-L-proline + L-lysine. Contributes to degradation of proteins cross-linked by transglutaminases by degrading the cross-link between a lysine and a glutamic acid residue. Catalyzes the formation of 5-oxo-L-proline from L-gamma-glutamyl-L-epsilon-lysine. Inactive with L-gamma-glutamyl-alpha-amino acid substrates such as L-gamma-glutamyl-L-alpha-cysteine and L-gamma-glutamyl-L-alpha-alanine. This Bos taurus (Bovine) protein is Gamma-glutamylaminecyclotransferase (GGACT).